A 142-amino-acid polypeptide reads, in one-letter code: UPF0179 protein PH1477 (142 aa).

It belongs to the UPF0179 family.

This Pyrococcus horikoshii (strain ATCC 700860 / DSM 12428 / JCM 9974 / NBRC 100139 / OT-3) protein is UPF0179 protein PH1477.